The primary structure comprises 325 residues: GMP reductase (325 aa).

C173 (thioimidate intermediate) is an active-site residue. 202–225 (IIADGGIRSHGDIAKSIRFGATMV) lines the NADP(+) pocket.

The protein belongs to the IMPDH/GMPR family. GuaC type 2 subfamily.

The enzyme catalyses IMP + NH4(+) + NADP(+) = GMP + NADPH + 2 H(+). Catalyzes the irreversible NADPH-dependent deamination of GMP to IMP. It functions in the conversion of nucleobase, nucleoside and nucleotide derivatives of G to A nucleotides, and in maintaining the intracellular balance of A and G nucleotides. This Paracidovorax citrulli (strain AAC00-1) (Acidovorax citrulli) protein is GMP reductase.